We begin with the raw amino-acid sequence, 242 residues long: ATP synthase subunit a (242 aa).

5 helical membrane-spanning segments follow: residues 21–41 (LASV…AIVC), 83–103 (AVTL…FAIV), 118–137 (ATVT…YYGI), 175–195 (LYGN…LFFE), and 198–218 (AWGW…SIFV).

The protein belongs to the ATPase A chain family. F-type ATPases have 2 components, CF(1) - the catalytic core - and CF(0) - the membrane proton channel. CF(1) has five subunits: alpha(3), beta(3), gamma(1), delta(1), epsilon(1). CF(0) has three main subunits: a(1), b(2) and c(9-12). The alpha and beta chains form an alternating ring which encloses part of the gamma chain. CF(1) is attached to CF(0) by a central stalk formed by the gamma and epsilon chains, while a peripheral stalk is formed by the delta and b chains.

The protein resides in the cell membrane. Functionally, key component of the proton channel; it plays a direct role in the translocation of protons across the membrane. This Staphylococcus epidermidis (strain ATCC 35984 / DSM 28319 / BCRC 17069 / CCUG 31568 / BM 3577 / RP62A) protein is ATP synthase subunit a.